Consider the following 132-residue polypeptide: Fatty acid-binding protein 12 (132 aa).

Residues R107 and 127–129 each bind a fatty acid; that span reads RTY.

This sequence belongs to the calycin superfamily. Fatty-acid binding protein (FABP) family. As to expression, highly expressed in adult retina and testis with lower levels in cerebral cortex, kidney and epididymis. In the retina, strongly expressed in the ganglion cell layer and throughout the inner nuclear layer in amacrine and bipolar cells. Not expressed in the outer nuclear layer. In the testis, detected in the seminiferous tubules.

Its function is as follows. May play a role in lipid transport. This chain is Fatty acid-binding protein 12, found in Rattus norvegicus (Rat).